The sequence spans 204 residues: Probable nicotinate-nucleotide adenylyltransferase (204 aa).

Belongs to the NadD family.

The catalysed reaction is nicotinate beta-D-ribonucleotide + ATP + H(+) = deamido-NAD(+) + diphosphate. It participates in cofactor biosynthesis; NAD(+) biosynthesis; deamido-NAD(+) from nicotinate D-ribonucleotide: step 1/1. Catalyzes the reversible adenylation of nicotinate mononucleotide (NaMN) to nicotinic acid adenine dinucleotide (NaAD). This Mycolicibacterium gilvum (strain PYR-GCK) (Mycobacterium gilvum (strain PYR-GCK)) protein is Probable nicotinate-nucleotide adenylyltransferase.